The following is a 321-amino-acid chain: Phospho-N-acetylmuramoyl-pentapeptide-transferase (321 aa).

The next 10 helical transmembrane spans lie at 1 to 21 (MIFV…PVLI), 50 to 70 (MGGL…IIFV), 76 to 96 (IILL…DDYI), 112 to 132 (FLAQ…FHLV), 140 to 160 (IPFT…IVFW), 176 to 196 (GLAT…SFVL), 200 to 220 (AIGI…PYNI), 225 to 245 (VFMG…ISIM), 250 to 270 (LSLI…MLQV), and 300 to 320 (VVTV…WIGV).

Belongs to the glycosyltransferase 4 family. MraY subfamily. Mg(2+) is required as a cofactor.

Its subcellular location is the cell membrane. The catalysed reaction is UDP-N-acetyl-alpha-D-muramoyl-L-alanyl-gamma-D-glutamyl-L-lysyl-D-alanyl-D-alanine + di-trans,octa-cis-undecaprenyl phosphate = Mur2Ac(oyl-L-Ala-gamma-D-Glu-L-Lys-D-Ala-D-Ala)-di-trans,octa-cis-undecaprenyl diphosphate + UMP. It functions in the pathway cell wall biogenesis; peptidoglycan biosynthesis. Catalyzes the initial step of the lipid cycle reactions in the biosynthesis of the cell wall peptidoglycan: transfers peptidoglycan precursor phospho-MurNAc-pentapeptide from UDP-MurNAc-pentapeptide onto the lipid carrier undecaprenyl phosphate, yielding undecaprenyl-pyrophosphoryl-MurNAc-pentapeptide, known as lipid I. This chain is Phospho-N-acetylmuramoyl-pentapeptide-transferase, found in Staphylococcus aureus (strain MSSA476).